Here is a 197-residue protein sequence, read N- to C-terminus: Transposon Tn10 TetC protein (197 aa).

An HTH tetR-type domain is found at 12–72 (KSTYQSLVNS…ACYKQQLIMI (61 aa)). A DNA-binding region (H-T-H motif) is located at residues 35-54 (SIDEISGKALVTKGAFYHHF).

The chain is Transposon Tn10 TetC protein (tetC) from Escherichia coli.